The primary structure comprises 523 residues: UDP-glucuronosyltransferase 3A2 (523 aa).

The N-terminal stretch at 1-22 (MAGQRVLLLVGFLLPGVLLSEA) is a signal peptide. Over 23 to 483 (AKILTISTVG…YVFQQPWHEQ (461 aa)) the chain is Extracellular. N-linked (GlcNAc...) asparagine glycosylation is present at Asn-52. Residues 484–504 (YLLDVFVFLLGLTLGTLWLCG) form a helical membrane-spanning segment. The Cytoplasmic segment spans residues 505–523 (KLLGMAVWWLRGARKVKET).

This sequence belongs to the UDP-glycosyltransferase family.

It is found in the membrane. It catalyses the reaction glucuronate acceptor + UDP-alpha-D-glucuronate = acceptor beta-D-glucuronoside + UDP + H(+). In terms of biological role, UDP-glucuronosyltransferases catalyze phase II biotransformation reactions in which lipophilic substrates are conjugated with glucuronic acid to increase water solubility and enhance excretion. They are of major importance in the conjugation and subsequent elimination of potentially toxic xenobiotics and endogenous compounds. The polypeptide is UDP-glucuronosyltransferase 3A2 (UGT3A2) (Homo sapiens (Human)).